Consider the following 527-residue polypeptide: Butyrophilin subfamily 2 member A1 (527 aa).

Positions 1–28 (MESAAALHFSRPASLLLLLLSLCALVSA) are cleaved as a signal peptide. The region spanning 29-141 (QFIVVGPTDP…SYDEAILHLV (113 aa)) is the Ig-like V-type domain. Residues 29-248 (QFIVVGPTDP…SFMPSVSPCA (220 aa)) lie on the Extracellular side of the membrane. 3 N-linked (GlcNAc...) asparagine glycosylation sites follow: Asn46, Asn114, and Asn120. The cysteines at positions 51 and 125 are disulfide-linked. The helical transmembrane segment at 249–269 (VALPIIVVILMIPIAVCIYWI) threads the bilayer. Over 270-527 (NKLQKEKKIL…LHRVGTHQSL (258 aa)) the chain is Cytoplasmic. The B30.2/SPRY domain maps to 310–506 (VKEKLQEELR…IFICPALTGA (197 aa)).

This sequence belongs to the immunoglobulin superfamily. BTN/MOG family. In terms of tissue distribution, highly expressed in brain, bone marrow, small intestine, muscle, spleen and pancreas. Moderate expression was seen in lung, liver and kidney.

The protein localises to the membrane. The protein is Butyrophilin subfamily 2 member A1 (BTN2A1) of Homo sapiens (Human).